The following is a 524-amino-acid chain: MGALSSRVLRPAGRTEQPEPTPGAGGAARRSDAGEDAGHSFCYCPGGRKRKRSSGTFCYCHPDSETDDDEDEGDEQQRLLNTPRRKKLKSTSKYIYQTLFLNGENSDIKICALGEEWSLHKIYLCQSGYFSSMFSGSWKESSMNIIELEIPDQNIDIEALQVAFGSLYRDDVLIKPSRVVAILAAACMLQLDGLIQQCGETMKETISVRTVCGYYTSAGTYGLDSVKKKCLEWLLNNLMTHQSVELFKELSINVMKQLIGSSNLFVMQVEMDVYTALKKWMFLQLVPSWNGSLKQLLTETDVWFSKWKKDFEGTTFLETEQGKPFAPVFRHLRLQYIISDLASARIIEQDSLVPSEWLAAVYKQQWLAMLRAEQDSEVGPQEINKEELEGNSMRCGRKLAKDGEYCWRWTGFNFGFDLLVTYTNRYIIFKRNTLNQPCSGSVSLQPRRSIAFRLRLASFDSSGKLICSRATGYQILTLEKDQEQVVMNLDSRLLIFPLYICCNFLYISPEKRTESNRHPENPGH.

Residues 1–37 (MGALSSRVLRPAGRTEQPEPTPGAGGAARRSDAGEDA) form a disordered region. The Nuclear localization signal signature appears at 47–53 (GRKRKRS). The segment at 63 to 83 (DSETDDDEDEGDEQQRLLNTP) is disordered. At Ser64 the chain carries Phosphoserine. The span at 65–74 (ETDDDEDEGD) shows a compositional bias: acidic residues. Thr66 carries the phosphothreonine modification. Positions 83–89 (PRRKKLK) match the Nuclear localization signal motif. One can recognise a BTB domain in the interval 106–176 (SDIKICALGE…LYRDDVLIKP (71 aa)).

As to quaternary structure, interacts with TMPO-Beta, TSG101 and TFDP2. Interacts with EMD. In terms of tissue distribution, ubiquitously expressed at low levels throughout development and in adult tissues.

The protein localises to the nucleus matrix. Functionally, possible function in spermatogenesis. Enhances the degradation of MDM2 and increases the amount of p53 probably by modulating the nucleocytoplasmic transport. This Mus musculus (Mouse) protein is Germ cell-less protein-like 1 (Gmcl1).